Consider the following 142-residue polypeptide: Midkine-A (142 aa).

A signal peptide spans 1 to 20 (MELRAFCVILLITVLAVSSQ). 5 cysteine pairs are disulfide-bonded: C36/C60, C44/C69, C51/C73, C83/C115, and C93/C125.

Belongs to the pleiotrophin family. Expression at the mid-gastrula stage begins in the neural anlage, and becomes increasingly prominent in the central nervous system and head mesenchyme during neurula stages. Although the mRNA is localized to the developing central nervous system (CNS), the protein is deposited at the neuromuscular junction (NMJ). In the tailbud stage embryo, expressed in the head and tail regions as well as in the CNS. In adults, expression is highest in the brain, eye and bone, with lower expression in the heart and lung. Not expressed in the ovary.

Its subcellular location is the secreted. In terms of biological role, secreted protein that functions as a cytokine and growth factor and mediates its signal through cell-surface proteoglycan and non-proteoglycan receptors. Binds cell-surface proteoglycan receptors via their chondroitin sulfate (CS) groups. Thereby regulates many processes like inflammatory response, cell proliferation, cell adhesion, cell growth, cell survival, tissue regeneration, cell differentiation and cell migration. Inhibits mesoderm formation and promotes neural formation during development. Plays a role in development of the neuromuscular junction (NMJ). Has antibacterial activity against both Gram-positive and Gram-negative bacteria. The chain is Midkine-A (mdk-a) from Xenopus laevis (African clawed frog).